Reading from the N-terminus, the 1118-residue chain is Protein translocase subunit SecA (1118 aa).

Residues Gln176, 194–198 (GEGKT), and Asp693 contribute to the ATP site. Positions 1034 to 1056 (QQPVQQPKYRETKDEAGSAFGGG) are disordered.

The protein belongs to the SecA family. In terms of assembly, monomer and homodimer. Part of the essential Sec protein translocation apparatus which comprises SecA, SecYEG and auxiliary proteins SecDF. Other proteins may also be involved.

The protein resides in the cell inner membrane. The protein localises to the cytoplasm. It catalyses the reaction ATP + H2O + cellular proteinSide 1 = ADP + phosphate + cellular proteinSide 2.. In terms of biological role, part of the Sec protein translocase complex. Interacts with the SecYEG preprotein conducting channel. Has a central role in coupling the hydrolysis of ATP to the transfer of proteins into and across the cell membrane, serving as an ATP-driven molecular motor driving the stepwise translocation of polypeptide chains across the membrane. The sequence is that of Protein translocase subunit SecA from Cytophaga hutchinsonii (strain ATCC 33406 / DSM 1761 / CIP 103989 / NBRC 15051 / NCIMB 9469 / D465).